A 255-amino-acid chain; its full sequence is Geranylgeranylglyceryl phosphate synthase (255 aa).

Mg(2+)-binding residues include aspartate 34 and threonine 64. Sn-glycerol 1-phosphate contacts are provided by residues 182–188 (YLEAGSG), 213–214 (GG), and 235–236 (GN).

It belongs to the GGGP/HepGP synthase family. Group II subfamily. Requires Mg(2+) as cofactor.

Its subcellular location is the cytoplasm. The catalysed reaction is sn-glycerol 1-phosphate + (2E,6E,10E)-geranylgeranyl diphosphate = sn-3-O-(geranylgeranyl)glycerol 1-phosphate + diphosphate. Its pathway is membrane lipid metabolism; glycerophospholipid metabolism. In terms of biological role, prenyltransferase that catalyzes the transfer of the geranylgeranyl moiety of geranylgeranyl diphosphate (GGPP) to the C3 hydroxyl of sn-glycerol-1-phosphate (G1P). This reaction is the first ether-bond-formation step in the biosynthesis of archaeal membrane lipids. This chain is Geranylgeranylglyceryl phosphate synthase, found in Saccharolobus islandicus (strain M.14.25 / Kamchatka #1) (Sulfolobus islandicus).